The chain runs to 380 residues: MAAPWWRAALCECRRWRGFSTSAVLGRRTPPLGPMPNSDIDLSNLERLEKYRSFDRYRRRAEQEAQAPHWWRTYREYFGEKTDPKEKIDIGLPPPKVSRTQQLLERKQAIQELRANVEEERAARLRTASVPLDAVRAEWERTCGPYHKQRLAEYYGLYRDLFHGATFVPRVPLHVAYAVGEDDLMPVYCGNEVTPTEAAQAPEVTYEAEEGSLWTLLLTSLDGHLLEPDAEYLHWLLTNIPGNRVAEGQVTCPYLPPFPARGSGIHRLAFLLFKQDQPIDFSEDARPSPCYQLAQRTFRTFDFYKKHQETMTPAGLSFFQCRWDDSVTYIFHQLLDMREPVFEFVRPPPYHPKQKRFPHRQPLRYLDRYRDSHEPTYGIY.

The N-terminal 26 residues, 1–26, are a transit peptide targeting the mitochondrion; that stretch reads MAAPWWRAALCECRRWRGFSTSAVLG. Residues 99–127 adopt a coiled-coil conformation; sequence RTQQLLERKQAIQELRANVEEERAARLRT.

This sequence belongs to the phosphatidylethanolamine-binding protein family. Mitochondrion-specific ribosomal protein mL38 subfamily. In terms of assembly, component of the mitochondrial large ribosomal subunit (mt-LSU). Mature mammalian 55S mitochondrial ribosomes consist of a small (28S) and a large (39S) subunit. The 28S small subunit contains a 12S ribosomal RNA (12S mt-rRNA) and 30 different proteins. The 39S large subunit contains a 16S rRNA (16S mt-rRNA), a copy of mitochondrial valine transfer RNA (mt-tRNA(Val)), which plays an integral structural role, and 52 different proteins. mL38 is located at the central protuberance.

It is found in the mitochondrion. The chain is Large ribosomal subunit protein mL38 (MRPL38) from Homo sapiens (Human).